We begin with the raw amino-acid sequence, 488 residues long: 1-aminocyclopropane-1-carboxylate synthase-like protein 1 (488 aa).

An N6-(pyridoxal phosphate)lysine modification is found at lysine 273.

This sequence belongs to the class-I pyridoxal-phosphate-dependent aminotransferase family. In terms of assembly, homodimer. In terms of tissue distribution, expressed in young leaves and flowers. Not expressed in roots.

This Arabidopsis thaliana (Mouse-ear cress) protein is 1-aminocyclopropane-1-carboxylate synthase-like protein 1 (ACS1).